We begin with the raw amino-acid sequence, 549 residues long: Leiomodin-2 (549 aa).

Residues 1–42 form a tropomyosin-binding region; that stretch reads MSTFGYRRGLSKYESIDEDELLASLTAEELKELERELEDIEP. An interaction with tropomyosin alpha region spans residues 1-47; it reads MSTFGYRRGLSKYESIDEDELLASLTAEELKELERELEDIEPDRNLP. Interaction with actin regions lie at residues 1–164, 165–499, and 523–542; these read MSTF…PDNS, KPKT…KEIK, and AHENLMEAIRGSSIRQLRRV. 3 positions are modified to phosphoserine: Ser-11, Ser-15, and Ser-24. Disordered stretches follow at residues 91-166, 179-200, 358-455, and 469-534; these read KLAE…NSKP, TNGNSGGTQRNTESPAAIHPCG, MDKQ…PGKK, and ESAQ…IRGS. Composition is skewed to acidic residues over residues 95-105 and 113-143; these read EDKEESEEELI and VSEEVCTEEEEESTEEEEEEEEEDSEEEEVT. 2 stretches are compositionally biased toward polar residues: residues 150 to 163 and 179 to 192; these read INGTVSHNGVNPDN and TNGNSGGTQRNTES. The span at 358–376 shows a compositional bias: basic and acidic residues; the sequence is MDKQRQKRMQEQKQQEGHD. A compositionally biased stretch (polar residues) spans 390 to 401; the sequence is TPGSSPYASPRQ. Position 406 is a phosphoserine (Ser-406). Residues 420-452 show a composition bias toward pro residues; the sequence is PPSPVAPPPPPPPPPLPPHMLPPPPPPPAPPLP. Residues 457–515 are a coiled coil; it reads ITRNIAEVIKQQESAQRALQNGQRKKKGKKVKKQPNNILKEIKNSLRSVQEKKMEESSR. The span at 469-478 shows a compositional bias: polar residues; the sequence is ESAQRALQNG. The span at 479 to 489 shows a compositional bias: basic residues; sequence QRKKKGKKVKK. Residues 496–514 show a composition bias toward basic and acidic residues; the sequence is KEIKNSLRSVQEKKMEESS. The 20-residue stretch at 523–542 folds into the WH2 domain; the sequence is AHENLMEAIRGSSIRQLRRV.

This sequence belongs to the tropomodulin family. As to quaternary structure, can bind at least three actin monomers and thereby provides a nucleus for actin filament formation. Interacts (via N-terminus) with tropomyosin alpha (TPM1) (via N-terminus). May also interact with TPM2 (via N-terminus). Interacts with FLII.

The protein resides in the cytoplasm. Its subcellular location is the myofibril. It localises to the sarcomere. The protein localises to the m line. It is found in the cytoskeleton. Functionally, mediates nucleation of actin filaments and thereby promotes actin polymerization. Plays a role in the regulation of actin filament length. Required for normal sarcomere organization in the heart, and for normal heart function. This chain is Leiomodin-2 (Lmod2), found in Rattus norvegicus (Rat).